The sequence spans 174 residues: ATP synthase subunit delta, sodium ion specific (174 aa).

Belongs to the ATPase delta chain family. In terms of assembly, F-type ATPases have 2 components, F(1) - the catalytic core - and F(0) - the membrane proton channel. F(1) has five subunits: alpha(3), beta(3), gamma(1), delta(1), epsilon(1). F(0) has three main subunits: a(1), b(2) and c(10-14). The alpha and beta chains form an alternating ring which encloses part of the gamma chain. F(1) is attached to F(0) by a central stalk formed by the gamma and epsilon chains, while a peripheral stalk is formed by the delta and b chains.

The protein localises to the cell inner membrane. In terms of biological role, f(1)F(0) ATP synthase produces ATP from ADP in the presence of a proton or sodium gradient. F-type ATPases consist of two structural domains, F(1) containing the extramembraneous catalytic core and F(0) containing the membrane proton channel, linked together by a central stalk and a peripheral stalk. During catalysis, ATP synthesis in the catalytic domain of F(1) is coupled via a rotary mechanism of the central stalk subunits to proton translocation. Functionally, this protein is part of the stalk that links CF(0) to CF(1). It either transmits conformational changes from CF(0) to CF(1) or is implicated in proton conduction. This chain is ATP synthase subunit delta, sodium ion specific, found in Propionigenium modestum.